Here is a 598-residue protein sequence, read N- to C-terminus: Elongation factor 4 (598 aa).

Residues Ile-4 to Ser-186 form the tr-type G domain. GTP is bound by residues Asp-16–Thr-21 and Asn-133–Asp-136.

It belongs to the TRAFAC class translation factor GTPase superfamily. Classic translation factor GTPase family. LepA subfamily.

It is found in the cell inner membrane. The catalysed reaction is GTP + H2O = GDP + phosphate + H(+). In terms of biological role, required for accurate and efficient protein synthesis under certain stress conditions. May act as a fidelity factor of the translation reaction, by catalyzing a one-codon backward translocation of tRNAs on improperly translocated ribosomes. Back-translocation proceeds from a post-translocation (POST) complex to a pre-translocation (PRE) complex, thus giving elongation factor G a second chance to translocate the tRNAs correctly. Binds to ribosomes in a GTP-dependent manner. The sequence is that of Elongation factor 4 from Ehrlichia ruminantium (strain Welgevonden).